Consider the following 310-residue polypeptide: Ribosomal protein uL3 glutamine methyltransferase (310 aa).

Belongs to the protein N5-glutamine methyltransferase family. PrmB subfamily.

The catalysed reaction is L-glutaminyl-[ribosomal protein uL3] + S-adenosyl-L-methionine = N(5)-methyl-L-glutaminyl-[ribosomal protein uL3] + S-adenosyl-L-homocysteine + H(+). In terms of biological role, specifically methylates large ribosomal subunit protein uL3 on 'Gln-150'. This is Ribosomal protein uL3 glutamine methyltransferase from Salmonella typhi.